A 662-amino-acid polypeptide reads, in one-letter code: MQYTPFASDIELPFYIALASLKINHDKLDDSARKVLGLYELRPSDAPNASCRIQIHGNALTSDEVPSTYYRAEGMIKNVNTIEEYAKADKMGMLQQSGETIWNAINNGTIYSCPSLLSAFVILSYADLKKYKFHYWFAFPALHSDPSWTPLEEGCEGAQAHRLPSVESSALARSVQEWARVVDAPQRGFFLARRVRMRDDDTVSWKIASLSSYEDGFFKHAEFADCFTCFVDPSNYEEAPGWMLRNLLVLVKRRWGLTKVQILRYRDGPSPRDCGRSIVVTLRLKTSQLPDGGVKDDRMPKVTGWERNPSGKLTGRIVDLTEQLDPKRLADQSVDLNLKLMKWRISPNLDLEKIKGTKCLLLGAGTLGSYVARNLMAWGVRKITFVDNGSVSFSNPVRQPLFNFADCLDGGAKKAYRASQALSEIYPGVESVGHVLAVPMAGHPVLDAEKTKADFEVLKGLIDAHDVIILLMDTRESRWLPTVMGKAAGKIVMNAALGFDTFVVMRHGVTNNEHPEEELGCYFCNDVVAPMNSQKDQTLDQQCTVTRPGVAAIASALLVELLVSLLQHPLGAAAGAPQTPNNTQNDHPLGVIPHQIRGFLSTFENVSVVGRSYKCCSACSRPVIDEYKKNGWNFVQKALNEVGYVEELSGLKEVCHPPLSIA.

The GXGXXG motif signature appears at Gly-363–Gly-368. Residue Cys-543 is the Glycyl thioester intermediate of the active site.

Belongs to the ATG7 family. In terms of assembly, homodimer.

Its subcellular location is the cytoplasm. It is found in the preautophagosomal structure. Functionally, E1-like activating enzyme involved in the 2 ubiquitin-like systems required for cytoplasm to vacuole transport (Cvt) and autophagy. Activates atg12 for its conjugation with atg5 and atg8 for its conjugation with phosphatidylethanolamine. Both systems are needed for the atg8 association to Cvt vesicles and autophagosomes membranes. Autophagy is essential for maintenance of amino acid levels and protein synthesis under nitrogen starvation. Required for selective autophagic degradation of the nucleus (nucleophagy) as well as for mitophagy which contributes to regulate mitochondrial quantity and quality by eliminating the mitochondria to a basal level to fulfill cellular energy requirements and preventing excess ROS production. Plays a role in the regulation of filamentous growth and chronological longevity. The protein is Ubiquitin-like modifier-activating enzyme atg7 (atg7) of Emericella nidulans (strain FGSC A4 / ATCC 38163 / CBS 112.46 / NRRL 194 / M139) (Aspergillus nidulans).